The primary structure comprises 99 residues: Plastocyanin (99 aa).

In terms of domain architecture, Plastocyanin-like spans 1-99 (IEVLLGGDDG…AGMVGKVTVN (99 aa)). 4 residues coordinate Cu cation: histidine 37, cysteine 84, histidine 87, and methionine 92.

It belongs to the plastocyanin family. Requires Cu(2+) as cofactor.

The protein resides in the plastid. It is found in the chloroplast thylakoid membrane. In terms of biological role, participates in electron transfer between P700 and the cytochrome b6-f complex in photosystem I. In Cucurbita pepo (Vegetable marrow), this protein is Plastocyanin (PETE).